A 208-amino-acid polypeptide reads, in one-letter code: MSKVLFVKANDRTAEEAVSVKLYEAFLNSYKENHPNDEIVELDLYRENPPYLGRNAINGTFKAGKGMELNEDEKAAAAVADRYLDEFVKADKVVFAFPLWNFAVPAVLHTYVDYLSRAGVTFTYTPEGPKGLMGDKKVALLNARGGFYSEGPMAAMEMSLNYMKTVMGFFGVQDLHTVVIEGHNAVPDDAQKIIENGLAEAKKLAASF.

Belongs to the azoreductase type 1 family. Homodimer. FMN serves as cofactor.

It catalyses the reaction 2 a quinone + NADH + H(+) = 2 a 1,4-benzosemiquinone + NAD(+). The catalysed reaction is N,N-dimethyl-1,4-phenylenediamine + anthranilate + 2 NAD(+) = 2-(4-dimethylaminophenyl)diazenylbenzoate + 2 NADH + 2 H(+). Its function is as follows. Quinone reductase that provides resistance to thiol-specific stress caused by electrophilic quinones. Functionally, also exhibits azoreductase activity. Catalyzes the reductive cleavage of the azo bond in aromatic azo compounds to the corresponding amines. The polypeptide is FMN-dependent NADH:quinone oxidoreductase 1 (Bacillus licheniformis (strain ATCC 14580 / DSM 13 / JCM 2505 / CCUG 7422 / NBRC 12200 / NCIMB 9375 / NCTC 10341 / NRRL NRS-1264 / Gibson 46)).